The following is a 375-amino-acid chain: 4,4'-diaponeurosporenoate glycosyltransferase (375 aa).

The next 4 membrane-spanning stretches (helical) occupy residues tryptophan 3–phenylalanine 23, phenylalanine 164–serine 184, isoleucine 277–leucine 297, and phenylalanine 330–isoleucine 350.

It belongs to the glycosyltransferase 2 family. CrtQ subfamily.

It localises to the cell membrane. It participates in carotenoid biosynthesis; staphyloxanthin biosynthesis; staphyloxanthin from farnesyl diphosphate: step 4/5. Catalyzes the glycosylation of 4,4'-diaponeurosporenoate, i.e. the esterification of glucose at the C1'' position with the carboxyl group of 4,4'-diaponeurosporenic acid, to form glycosyl-4,4'-diaponeurosporenoate. This is a step in the biosynthesis of staphyloxanthin, an orange pigment present in most staphylococci strains. This is 4,4'-diaponeurosporenoate glycosyltransferase (crtQ) from Staphylococcus aureus (strain bovine RF122 / ET3-1).